A 697-amino-acid polypeptide reads, in one-letter code: Elongation factor G (697 aa).

One can recognise a tr-type G domain in the interval 8 to 290 (ERYRNFGIMA…AVVDYLPSPL (283 aa)). GTP is bound by residues 17-24 (AHIDAGKT), 88-92 (DTPGH), and 142-145 (NKLD).

This sequence belongs to the TRAFAC class translation factor GTPase superfamily. Classic translation factor GTPase family. EF-G/EF-2 subfamily.

The protein localises to the cytoplasm. In terms of biological role, catalyzes the GTP-dependent ribosomal translocation step during translation elongation. During this step, the ribosome changes from the pre-translocational (PRE) to the post-translocational (POST) state as the newly formed A-site-bound peptidyl-tRNA and P-site-bound deacylated tRNA move to the P and E sites, respectively. Catalyzes the coordinated movement of the two tRNA molecules, the mRNA and conformational changes in the ribosome. The polypeptide is Elongation factor G (Sphingopyxis alaskensis (strain DSM 13593 / LMG 18877 / RB2256) (Sphingomonas alaskensis)).